We begin with the raw amino-acid sequence, 213 residues long: Probable elongation factor 1-beta/1-delta 1 (213 aa).

Belongs to the EF-1-beta/EF-1-delta family. EF-1 is composed of 4 subunits: alpha, beta, delta, and gamma.

EF-1-beta and EF-1-delta stimulate the exchange of GDP bound to EF-1-alpha to GTP. This Caenorhabditis elegans protein is Probable elongation factor 1-beta/1-delta 1 (eef-1B.1).